Reading from the N-terminus, the 177-residue chain is Alkyl hydroperoxide reductase AhpD (177 aa).

The active-site Proton donor is the Cys-133. Cys-133 and Cys-136 are oxidised to a cystine. Residue Cys-136 is the Cysteine sulfenic acid (-SOH) intermediate of the active site.

Belongs to the AhpD family.

The enzyme catalyses N(6)-[(R)-dihydrolipoyl]-L-lysyl-[lipoyl-carrier protein] + a hydroperoxide = N(6)-[(R)-lipoyl]-L-lysyl-[lipoyl-carrier protein] + an alcohol + H2O. Functionally, antioxidant protein with alkyl hydroperoxidase activity. Required for the reduction of the AhpC active site cysteine residues and for the regeneration of the AhpC enzyme activity. The protein is Alkyl hydroperoxide reductase AhpD of Coxiella burnetii (strain CbuG_Q212) (Coxiella burnetii (strain Q212)).